The sequence spans 166 residues: Disulfide bond formation protein B (166 aa).

At Met1–Gly11 the chain is on the cytoplasmic side. Residues Tyr12 to Phe28 form a helical membrane-spanning segment. Residues Leu29–Ile46 lie on the Periplasmic side of the membrane. Cys38 and Cys41 are oxidised to a cystine. Residues Ala47–Pro63 traverse the membrane as a helical segment. Topologically, residues Gly64–Lys69 are cytoplasmic. The helical transmembrane segment at Val70–Ala87 threads the bilayer. Topologically, residues Arg88–Gln144 are periplasmic. A disulfide bond links Cys103 and Cys130. The helical transmembrane segment at Leu145–His163 threads the bilayer. At Lys164–Ala166 the chain is on the cytoplasmic side.

The protein belongs to the DsbB family.

Its subcellular location is the cell inner membrane. Its function is as follows. Required for disulfide bond formation in some periplasmic proteins. Acts by oxidizing the DsbA protein. The chain is Disulfide bond formation protein B from Methylobacillus flagellatus (strain ATCC 51484 / DSM 6875 / VKM B-1610 / KT).